The chain runs to 407 residues: Peptide chain release factor subunit 1 (407 aa).

Belongs to the eukaryotic release factor 1 family. Heterodimer of two subunits, one of which binds GTP.

The protein resides in the cytoplasm. Its function is as follows. Directs the termination of nascent peptide synthesis (translation) in response to the termination codons UAA, UAG and UGA. The polypeptide is Peptide chain release factor subunit 1 (prf1) (Archaeoglobus fulgidus (strain ATCC 49558 / DSM 4304 / JCM 9628 / NBRC 100126 / VC-16)).